The chain runs to 199 residues: Signal peptidase complex subunit 2 (199 aa).

Over 1 to 49 (MGKKDEKSQQGEELVKVNKWDGSAVKHALDDAVKTCLLGDRPQLKEQFG) the chain is Cytoplasmic. The helical transmembrane segment at 50–72 (LVNTRLALCALAVSVAIMAHAWD) threads the bilayer. At 73 to 81 (FTHPFPESR) the chain is on the lumenal side. A helical transmembrane segment spans residues 82–104 (PVLLFSVLAYFALLGILTLHSSF). Over 105-199 (REKGTFAVAL…KKNASSLSSN (95 aa)) the chain is Cytoplasmic.

This sequence belongs to the SPCS2 family. As to quaternary structure, component of the signal peptidase complex (SPC) composed of a catalytic subunit twr/SEC11 and three accessory subunits Spase12/SPCS1, Spase25/SPCS2 and Spase22-23/SPCS3. The complex induces a local thinning of the ER membrane which is used to measure the length of the signal peptide (SP) h-region of protein substrates. This ensures the selectivity of the complex towards h-regions shorter than 18-20 amino acids.

The protein localises to the endoplasmic reticulum membrane. In terms of biological role, component of the signal peptidase complex (SPC) which catalyzes the cleavage of N-terminal signal sequences from nascent proteins as they are translocated into the lumen of the endoplasmic reticulum. Enhances the enzymatic activity of SPC and facilitates the interactions between different components of the translocation site. The protein is Signal peptidase complex subunit 2 (Spase25) of Drosophila melanogaster (Fruit fly).